We begin with the raw amino-acid sequence, 238 residues long: Probable transcriptional regulatory protein llmg_0242 (238 aa).

Belongs to the TACO1 family. YeeN subfamily.

Its subcellular location is the cytoplasm. In Lactococcus lactis subsp. cremoris (strain MG1363), this protein is Probable transcriptional regulatory protein llmg_0242.